Here is a 177-residue protein sequence, read N- to C-terminus: Nucleoside triphosphate/diphosphate phosphatase (177 aa).

R23 serves as the catalytic Proton donor. N87, D103, D105, D107, D120, and E123 together coordinate Mg(2+).

This sequence belongs to the Ntdp family. Mg(2+) is required as a cofactor.

It carries out the reaction a ribonucleoside 5'-triphosphate + H2O = a ribonucleoside 5'-diphosphate + phosphate + H(+). The catalysed reaction is a ribonucleoside 5'-diphosphate + H2O = a ribonucleoside 5'-phosphate + phosphate + H(+). Functionally, has nucleoside phosphatase activity towards nucleoside triphosphates and nucleoside diphosphates. This is Nucleoside triphosphate/diphosphate phosphatase from Streptococcus pyogenes serotype M1.